A 72-amino-acid chain; its full sequence is Alpha-elapitoxin-Dpp2d (72 aa).

Cystine bridges form between Cys-3/Cys-21, Cys-14/Cys-42, Cys-27/Cys-31, Cys-46/Cys-57, and Cys-58/Cys-63. Arg-72 carries the arginine amide modification.

The protein belongs to the three-finger toxin family. Long-chain subfamily. Type II alpha-neurotoxin sub-subfamily. As to quaternary structure, monomer (predominant). Post-translationally, amidation does not significantly affect toxin selectivity, since the activity profile and binding data are reminiscent of classical long-chain 3-finger toxins with a free carboxyl termini. As to expression, expressed by the venom gland.

The protein localises to the secreted. In terms of biological role, binds with high affinity to muscular (IC(50)=114 nM) and neuronal (alpha-7/CHRNA7) (IC(50)=58 nM) nicotinic acetylcholine receptor (nAChR) and inhibits acetylcholine from binding to the receptor, thereby impairing neuromuscular and neuronal transmission. Competitive radioligand binding assays also demonstrate that this toxin competes with epibatidine binding to the Lymnaea stagnalis acetylcholine-binding protein (Ls-AChBP) (IC(50)=4.9 nM). The sequence is that of Alpha-elapitoxin-Dpp2d from Dendroaspis polylepis polylepis (Black mamba).